A 311-amino-acid polypeptide reads, in one-letter code: Protoheme IX farnesyltransferase (311 aa).

The next 8 helical transmembrane spans lie at Val30–Pro50, Trp55–Phe75, Phe108–Thr128, Met129–Pro149, Gln153–Met173, Trp182–Tyr202, Phe233–Leu253, and Ile287–Leu307.

It belongs to the UbiA prenyltransferase family. Protoheme IX farnesyltransferase subfamily.

Its subcellular location is the cell inner membrane. The enzyme catalyses heme b + (2E,6E)-farnesyl diphosphate + H2O = Fe(II)-heme o + diphosphate. It participates in porphyrin-containing compound metabolism; heme O biosynthesis; heme O from protoheme: step 1/1. Its function is as follows. Converts heme B (protoheme IX) to heme O by substitution of the vinyl group on carbon 2 of heme B porphyrin ring with a hydroxyethyl farnesyl side group. The protein is Protoheme IX farnesyltransferase of Methylibium petroleiphilum (strain ATCC BAA-1232 / LMG 22953 / PM1).